The chain runs to 866 residues: Sphingomyelin phosphodiesterase 4 (866 aa).

A phosphoserine mark is found at Ser-169 and Ser-285. Thr-708 carries the phosphothreonine modification. At Ser-792 the chain carries Phosphoserine. Residues 822 to 842 traverse the membrane as a helical segment; the sequence is LLLAFFVASLFCVGPLPCTLL.

Requires Mg(2+) as cofactor. As to expression, widely expressed, with highest levels in heart and skeletal muscle. Expressed in skeletal muscle (at protein level). In terms of tissue distribution, expressed in skeletal muscle but a lower levels than isoform 1 (at protein level).

It is found in the endoplasmic reticulum membrane. The protein resides in the golgi apparatus membrane. The protein localises to the nucleus envelope. It localises to the cell membrane. Its subcellular location is the sarcolemma. The catalysed reaction is a sphingomyelin + H2O = phosphocholine + an N-acylsphing-4-enine + H(+). With respect to regulation, activated by phosphatidylserine and tumor necrosis factor (TNF). Inhibited by scyphostatin. In terms of biological role, catalyzes the hydrolysis of membrane sphingomyelin to form phosphorylcholine and ceramide. It has a relevant role in the homeostasis of membrane sphingolipids, thereby influencing membrane integrity, and endoplasmic reticulum organization and function. May sensitize cells to DNA damage-induced apoptosis. In skeletal muscle, mediates TNF-stimulated oxidant production. This chain is Sphingomyelin phosphodiesterase 4, found in Homo sapiens (Human).